The chain runs to 213 residues: ATP phosphoribosyltransferase (213 aa).

It belongs to the ATP phosphoribosyltransferase family. Short subfamily. As to quaternary structure, heteromultimer composed of HisG and HisZ subunits.

It is found in the cytoplasm. The catalysed reaction is 1-(5-phospho-beta-D-ribosyl)-ATP + diphosphate = 5-phospho-alpha-D-ribose 1-diphosphate + ATP. It participates in amino-acid biosynthesis; L-histidine biosynthesis; L-histidine from 5-phospho-alpha-D-ribose 1-diphosphate: step 1/9. Catalyzes the condensation of ATP and 5-phosphoribose 1-diphosphate to form N'-(5'-phosphoribosyl)-ATP (PR-ATP). Has a crucial role in the pathway because the rate of histidine biosynthesis seems to be controlled primarily by regulation of HisG enzymatic activity. The sequence is that of ATP phosphoribosyltransferase from Teredinibacter turnerae (strain ATCC 39867 / T7901).